The primary structure comprises 375 residues: MAGELFIGLMSGTSLDGVDGVLADFADGRIAVRAYATAPFPAALRAELMALNTPGDNELHRAALAGNGLARLYAGVASQLLADSSTPASQVAALGAHGQTVRHRPTEFDGVGYTLQINNPSLLAELTGIDVVADFRSRDLAAGGQGAPLVPAFHRALFARAGQPVAVLNIGGISNLSLLPAADAPGEPAVLGFDCGPGNALMDHWSQLHTGQPFDRGGRWAASGQVLPGLLARLQADPYFAKAPPKSTGRDLFNPAWLSACLAPAIGAAPADVQATLTEFTASVCAADVLRYGSDSKLLIVCGGGALNDHLIERLRAHLPGVEVAASTAHGLPPLQVEAAAFAWLARSTLRREAGNLASVTGARGGRVLGAIYPA.

Gly12 to Asp19 is an ATP binding site.

It belongs to the anhydro-N-acetylmuramic acid kinase family.

The catalysed reaction is 1,6-anhydro-N-acetyl-beta-muramate + ATP + H2O = N-acetyl-D-muramate 6-phosphate + ADP + H(+). Its pathway is amino-sugar metabolism; 1,6-anhydro-N-acetylmuramate degradation. It functions in the pathway cell wall biogenesis; peptidoglycan recycling. In terms of biological role, catalyzes the specific phosphorylation of 1,6-anhydro-N-acetylmuramic acid (anhMurNAc) with the simultaneous cleavage of the 1,6-anhydro ring, generating MurNAc-6-P. Is required for the utilization of anhMurNAc either imported from the medium or derived from its own cell wall murein, and thus plays a role in cell wall recycling. In Variovorax paradoxus (strain S110), this protein is Anhydro-N-acetylmuramic acid kinase.